The following is a 404-amino-acid chain: S-adenosylmethionine synthase (404 aa).

Position 139–144 (139–144 (GKGSSD)) interacts with ATP.

Belongs to the AdoMet synthase 2 family. It depends on Mg(2+) as a cofactor.

The catalysed reaction is L-methionine + ATP + H2O = S-adenosyl-L-methionine + phosphate + diphosphate. Its pathway is amino-acid biosynthesis; S-adenosyl-L-methionine biosynthesis; S-adenosyl-L-methionine from L-methionine: step 1/1. Its function is as follows. Catalyzes the formation of S-adenosylmethionine from methionine and ATP. This is S-adenosylmethionine synthase from Saccharolobus solfataricus (strain ATCC 35092 / DSM 1617 / JCM 11322 / P2) (Sulfolobus solfataricus).